The chain runs to 305 residues: Nod factor export ATP-binding protein I (305 aa).

The ABC transporter domain maps to 8-237; it reads IDLVGVRKSF…HIGCNVIEIY (230 aa). 40 to 47 lines the ATP pocket; the sequence is GPNGAGKS.

The protein belongs to the ABC transporter superfamily. Lipooligosaccharide exporter (TC 3.A.1.102) family. The complex is composed of two ATP-binding proteins (NodI) and two transmembrane proteins (NodJ).

It is found in the cell inner membrane. Functionally, part of the ABC transporter complex NodIJ involved in the export of the nodulation factors (Nod factors), the bacterial signal molecules that induce symbiosis and subsequent nodulation induction. Nod factors are LCO (lipo-chitin oligosaccharide), a modified beta-1,4-linked N-acetylglucosamine oligosaccharide. This subunit is responsible for energy coupling to the transport system. The sequence is that of Nod factor export ATP-binding protein I from Bradyrhizobium sp. (strain SNU001).